The chain runs to 129 residues: MMTDPIADMFTRIRNGQSAAKVAVQMPSSKVKVAIATLLKEEGYISEFSVSGEVKPELAVTLKYFEGKEVIEKIKRVSRPGLRIYKSCDELPKVLAGMGIAIISTSKGLMTDRAARSAGIGGEVLGFVE.

It belongs to the universal ribosomal protein uS8 family. In terms of assembly, part of the 30S ribosomal subunit. Contacts proteins S5 and S12.

In terms of biological role, one of the primary rRNA binding proteins, it binds directly to 16S rRNA central domain where it helps coordinate assembly of the platform of the 30S subunit. The protein is Small ribosomal subunit protein uS8 of Colwellia psychrerythraea (strain 34H / ATCC BAA-681) (Vibrio psychroerythus).